We begin with the raw amino-acid sequence, 147 residues long: 3-dehydroquinate dehydratase (147 aa).

Residue tyrosine 23 is the Proton acceptor of the active site. Asparagine 74, histidine 80, and aspartate 87 together coordinate substrate. The Proton donor role is filled by histidine 100. Residues 101-102 (IS) and arginine 111 contribute to the substrate site.

It belongs to the type-II 3-dehydroquinase family. Homododecamer.

It carries out the reaction 3-dehydroquinate = 3-dehydroshikimate + H2O. Its pathway is metabolic intermediate biosynthesis; chorismate biosynthesis; chorismate from D-erythrose 4-phosphate and phosphoenolpyruvate: step 3/7. Functionally, catalyzes a trans-dehydration via an enolate intermediate. The sequence is that of 3-dehydroquinate dehydratase from Prochlorococcus marinus (strain MIT 9301).